Here is an 890-residue protein sequence, read N- to C-terminus: Alanine--tRNA ligase (890 aa).

Residues His-564, His-568, Cys-677, and His-681 each coordinate Zn(2+).

This sequence belongs to the class-II aminoacyl-tRNA synthetase family. Requires Zn(2+) as cofactor.

The protein localises to the cytoplasm. It carries out the reaction tRNA(Ala) + L-alanine + ATP = L-alanyl-tRNA(Ala) + AMP + diphosphate. Functionally, catalyzes the attachment of alanine to tRNA(Ala) in a two-step reaction: alanine is first activated by ATP to form Ala-AMP and then transferred to the acceptor end of tRNA(Ala). Also edits incorrectly charged Ser-tRNA(Ala) and Gly-tRNA(Ala) via its editing domain. This Rhodopseudomonas palustris (strain BisB18) protein is Alanine--tRNA ligase.